The sequence spans 245 residues: DNA polymerase sliding clamp (245 aa).

This sequence belongs to the PCNA family. Homotrimer. The subunits circularize to form a toroid; DNA passes through its center. Replication factor C (RFC) is required to load the toroid on the DNA.

Its function is as follows. Sliding clamp subunit that acts as a moving platform for DNA processing. Responsible for tethering the catalytic subunit of DNA polymerase and other proteins to DNA during high-speed replication. This chain is DNA polymerase sliding clamp, found in Methanosarcina mazei (strain ATCC BAA-159 / DSM 3647 / Goe1 / Go1 / JCM 11833 / OCM 88) (Methanosarcina frisia).